Here is a 1322-residue protein sequence, read N- to C-terminus: Serine/threonine-protein phosphatase UIS2 (1322 aa).

The N-terminal stretch at Met-1 to Asn-22 is a signal peptide. The interval Met-1 to Met-535 is interaction with phosphorylated eIF2alpha. Composition is skewed to basic and acidic residues over residues Glu-267–Asn-279 and Asn-288–Asn-326. Disordered regions lie at residues Glu-267–Asn-326, Asn-613–Asn-646, Asn-1066–Asn-1087, and Glu-1170–Asp-1196. The span at Asn-631–Asn-646 shows a compositional bias: low complexity.

Requires Mn(2+) as cofactor.

The catalysed reaction is O-phospho-L-seryl-[protein] + H2O = L-seryl-[protein] + phosphate. In terms of biological role, protein phosphatase which dephosphorylates 'Ser-59' of translation factor eIF2alpha during the liver stage, thus enabling protein translation. This is Serine/threonine-protein phosphatase UIS2 from Plasmodium berghei (strain Anka).